A 393-amino-acid polypeptide reads, in one-letter code: NAD(P)H-quinone oxidoreductase subunit H, chloroplastic (393 aa).

Belongs to the complex I 49 kDa subunit family. NDH is composed of at least 16 different subunits, 5 of which are encoded in the nucleus.

The protein localises to the plastid. The protein resides in the chloroplast thylakoid membrane. It catalyses the reaction a plastoquinone + NADH + (n+1) H(+)(in) = a plastoquinol + NAD(+) + n H(+)(out). The catalysed reaction is a plastoquinone + NADPH + (n+1) H(+)(in) = a plastoquinol + NADP(+) + n H(+)(out). NDH shuttles electrons from NAD(P)H:plastoquinone, via FMN and iron-sulfur (Fe-S) centers, to quinones in the photosynthetic chain and possibly in a chloroplast respiratory chain. The immediate electron acceptor for the enzyme in this species is believed to be plastoquinone. Couples the redox reaction to proton translocation, and thus conserves the redox energy in a proton gradient. This is NAD(P)H-quinone oxidoreductase subunit H, chloroplastic from Trifolium subterraneum (Subterranean clover).